Consider the following 105-residue polypeptide: Small ribosomal subunit protein uS10 (105 aa).

The protein belongs to the universal ribosomal protein uS10 family. In terms of assembly, part of the 30S ribosomal subunit.

Functionally, involved in the binding of tRNA to the ribosomes. This chain is Small ribosomal subunit protein uS10, found in Synechococcus elongatus (strain ATCC 33912 / PCC 7942 / FACHB-805) (Anacystis nidulans R2).